We begin with the raw amino-acid sequence, 458 residues long: ATP synthase subunit beta (458 aa).

Gly-148 to Thr-155 is a binding site for ATP.

This sequence belongs to the ATPase alpha/beta chains family. In terms of assembly, F-type ATPases have 2 components, CF(1) - the catalytic core - and CF(0) - the membrane proton channel. CF(1) has five subunits: alpha(3), beta(3), gamma(1), delta(1), epsilon(1). CF(0) has three main subunits: a(1), b(2) and c(9-12). The alpha and beta chains form an alternating ring which encloses part of the gamma chain. CF(1) is attached to CF(0) by a central stalk formed by the gamma and epsilon chains, while a peripheral stalk is formed by the delta and b chains.

It is found in the cell inner membrane. The catalysed reaction is ATP + H2O + 4 H(+)(in) = ADP + phosphate + 5 H(+)(out). Its function is as follows. Produces ATP from ADP in the presence of a proton gradient across the membrane. The catalytic sites are hosted primarily by the beta subunits. This Nitrosococcus oceani (strain ATCC 19707 / BCRC 17464 / JCM 30415 / NCIMB 11848 / C-107) protein is ATP synthase subunit beta.